The primary structure comprises 360 residues: DNA replication and repair protein RecF (360 aa).

30–37 (GHNGSGKT) contributes to the ATP binding site.

The protein belongs to the RecF family.

Its subcellular location is the cytoplasm. Functionally, the RecF protein is involved in DNA metabolism; it is required for DNA replication and normal SOS inducibility. RecF binds preferentially to single-stranded, linear DNA. It also seems to bind ATP. The polypeptide is DNA replication and repair protein RecF (Shewanella amazonensis (strain ATCC BAA-1098 / SB2B)).